A 302-amino-acid chain; its full sequence is Ventral anterior homeobox 2a (302 aa).

Disordered regions lie at residues 1–35 (MFDQ…RDKG), 50–73 (KDIP…SQST), 156–175 (RRTK…SSST), 199–223 (PPNL…LGTS), and 282–302 (AFEP…KSTS). A DNA-binding region (homeobox) is located at residues 105-164 (PKRTRTSFTAEQLYRLELEFQRCQYVVGRERTELARQLNLSETQVKVWFQNRRTKQKKDQ). Over residues 161 to 172 (KKDQSRDSEKRS) the composition is skewed to basic and acidic residues. Residues 204-223 (SSSQNNMGTSSGNGTNLGTS) are compositionally biased toward low complexity. Over residues 287–296 (TRLDRKDTAS) the composition is skewed to basic and acidic residues.

The protein belongs to the EMX homeobox family.

The protein resides in the nucleus. Transcription factor that may function in dorsoventral specification of the forebrain. Regulates the expression of Wnt signaling antagonists including the expression of a truncated tcf7l2 isoform that cannot bind ctnnb1 and acts therefore as a potent dominant-negative Wnt antagonist. Plays a crucial role in eye development and, in particular, in the specification of the ventral optic vesicle. May be a regulator of axial polarization in the retina. The polypeptide is Ventral anterior homeobox 2a (vax2-a) (Xenopus laevis (African clawed frog)).